The chain runs to 98 residues: Ribonuclease P protein component 4 (98 aa).

4 residues coordinate Zn(2+): C62, C65, C85, and C88.

Belongs to the eukaryotic/archaeal RNase P protein component 4 family. As to quaternary structure, consists of a catalytic RNA component and at least 4-5 protein subunits. Zn(2+) serves as cofactor.

It is found in the cytoplasm. It carries out the reaction Endonucleolytic cleavage of RNA, removing 5'-extranucleotides from tRNA precursor.. In terms of biological role, part of ribonuclease P, a protein complex that generates mature tRNA molecules by cleaving their 5'-ends. In Thermoplasma volcanium (strain ATCC 51530 / DSM 4299 / JCM 9571 / NBRC 15438 / GSS1), this protein is Ribonuclease P protein component 4.